Consider the following 129-residue polypeptide: Fluoride-specific ion channel FluC 2 (129 aa).

Transmembrane regions (helical) follow at residues leucine 9–leucine 29, glycine 37–isoleucine 57, methionine 74–phenylalanine 94, and tyrosine 100–isoleucine 120. Glycine 76 and threonine 79 together coordinate Na(+).

Belongs to the fluoride channel Fluc/FEX (TC 1.A.43) family.

The protein resides in the cell membrane. It catalyses the reaction fluoride(in) = fluoride(out). Its activity is regulated as follows. Na(+) is not transported, but it plays an essential structural role and its presence is essential for fluoride channel function. Its function is as follows. Fluoride-specific ion channel. Important for reducing fluoride concentration in the cell, thus reducing its toxicity. This is Fluoride-specific ion channel FluC 2 from Ligilactobacillus salivarius (strain UCC118) (Lactobacillus salivarius).